Consider the following 276-residue polypeptide: Undecaprenyl-diphosphatase 1 (276 aa).

Helical transmembrane passes span 1–21, 44–64, 87–107, 114–134, 150–170, 190–210, 222–242, and 251–271; these read MSLW…LFPV, QLLP…LWYF, GHLM…GLLL, VFHD…LLWL, LTFK…IPGF, AAEF…LLEL, DALL…RFLM, and LASF…WFMF.

Belongs to the UppP family.

Its subcellular location is the cell inner membrane. The enzyme catalyses di-trans,octa-cis-undecaprenyl diphosphate + H2O = di-trans,octa-cis-undecaprenyl phosphate + phosphate + H(+). In terms of biological role, catalyzes the dephosphorylation of undecaprenyl diphosphate (UPP). Confers resistance to bacitracin. The protein is Undecaprenyl-diphosphatase 1 of Burkholderia pseudomallei (strain 1106a).